Reading from the N-terminus, the 150-residue chain is Large ribosomal subunit protein bL9 (150 aa).

This sequence belongs to the bacterial ribosomal protein bL9 family.

In terms of biological role, binds to the 23S rRNA. The protein is Large ribosomal subunit protein bL9 of Shewanella denitrificans (strain OS217 / ATCC BAA-1090 / DSM 15013).